The chain runs to 169 residues: Peptide deformylase (169 aa).

Residues C91 and H133 each contribute to the Fe cation site. E134 is an active-site residue. Residue H137 coordinates Fe cation.

The protein belongs to the polypeptide deformylase family. It depends on Fe(2+) as a cofactor.

The catalysed reaction is N-terminal N-formyl-L-methionyl-[peptide] + H2O = N-terminal L-methionyl-[peptide] + formate. In terms of biological role, removes the formyl group from the N-terminal Met of newly synthesized proteins. Requires at least a dipeptide for an efficient rate of reaction. N-terminal L-methionine is a prerequisite for activity but the enzyme has broad specificity at other positions. This is Peptide deformylase from Salmonella arizonae (strain ATCC BAA-731 / CDC346-86 / RSK2980).